A 190-amino-acid chain; its full sequence is CASP-like protein 1E1 (190 aa).

Positions 1 to 21 (MEHESKTKMDGIEMEKGKKEN) are disordered. Over 1-28 (MEHESKTKMDGIEMEKGKKENGSRKGVE) the chain is Cytoplasmic. Residues 29–49 (ITMRVLALVLTMVAATVLGVA) form a helical membrane-spanning segment. The Extracellular portion of the chain corresponds to 50 to 83 (KQTEVVPIKLIPTLPPLNVATTAKASYLSAFVYN). Residues 84–104 (ICANAIACGYTAISIMIVIIS) form a helical membrane-spanning segment. The Cytoplasmic portion of the chain corresponds to 105–111 (KGRRSKC). A helical membrane pass occupies residues 112–132 (LLMAVLIGDLMMVALLCSSTG). At 133 to 163 (AAGAIGLMGRHGNKHVMWKKVCGVFGKFCNQ) the chain is on the extracellular side. A helical transmembrane segment spans residues 164-184 (AAVSVAITLIASVVFMLLVVL). Residues 185–190 (DALKLP) lie on the Cytoplasmic side of the membrane.

Belongs to the Casparian strip membrane proteins (CASP) family. Homodimer and heterodimers.

It is found in the cell membrane. In Arabidopsis lyrata subsp. lyrata (Lyre-leaved rock-cress), this protein is CASP-like protein 1E1.